Consider the following 206-residue polypeptide: mRNA-decapping protein D9 (206 aa).

Residues 23 to 206 (KKTHVFAICV…FIYNTLLYSK (184 aa)) form the Nudix hydrolase domain. Residues 104–125 (GKLNKSETIDDCIRREIKEETD) carry the Nudix box motif. Glutamate 110 provides a ligand contact to Mg(2+). The active-site Nucleophile is glutamate 119. Mg(2+) contacts are provided by glutamate 123 and aspartate 144.

The protein belongs to the Nudix hydrolase family. Requires Mg(2+) as cofactor. Mn(2+) is required as a cofactor.

In terms of biological role, decapping enzyme required for the removal of the 5'-end m7GpppN cap tethered to viral and host mRNAs to allow their decay in cells. May therefore accelerate viral and cellular mRNA turnover to eliminate competing host mRNAs and allow stage-specific synthesis of viral proteins. Acceleration of the turnover of cellular transcripts may even promote the shutoff of host protein synthesis. Does not cleave unmethylated RNAs or RNAs shorter than 24 nucleotides. The chain is mRNA-decapping protein D9 from Oryctolagus cuniculus (Rabbit).